The primary structure comprises 458 residues: RuvB-like helicase 1 (458 aa).

An ATP-binding site is contributed by 71–78; it reads GGPGTGKT.

The protein belongs to the RuvB family. May form heterododecamers with RVB2. Component of the SWR1 chromatin remodeling complex, the INO80 chromatin remodeling complex, and of the R2TP complex.

It is found in the nucleus. The catalysed reaction is ATP + H2O = ADP + phosphate + H(+). Its function is as follows. DNA helicase which participates in several chromatin remodeling complexes, including the SWR1 and the INO80 complexes. The SWR1 complex mediates the ATP-dependent exchange of histone H2A for the H2A variant HZT1 leading to transcriptional regulation of selected genes by chromatin remodeling. The INO80 complex remodels chromatin by shifting nucleosomes and is involved in DNA repair. Also involved in pre-rRNA processing. This chain is RuvB-like helicase 1 (RVB1), found in Gibberella zeae (strain ATCC MYA-4620 / CBS 123657 / FGSC 9075 / NRRL 31084 / PH-1) (Wheat head blight fungus).